The sequence spans 302 residues: Nucleotide-binding protein SE_0548 (302 aa).

18 to 25 is an ATP binding site; the sequence is GMSGAGKS. 69–72 serves as a coordination point for GTP; the sequence is DLRG.

The protein belongs to the RapZ-like family.

In terms of biological role, displays ATPase and GTPase activities. This Staphylococcus epidermidis (strain ATCC 12228 / FDA PCI 1200) protein is Nucleotide-binding protein SE_0548.